The chain runs to 1352 residues: Spike glycoprotein (1352 aa).

Residues Met-1–Leu-12 form the signal peptide. Topologically, residues Ile-13–Pro-1297 are extracellular. Residues Gln-21 to Tyr-356 enclose the BetaCoV S1-NTD domain. N-linked (GlcNAc...) asparagine; by host glycosylation is found at Asn-30, Asn-71, Asn-111, Asn-132, Asn-162, Asn-172, Asn-227, and Asn-241. 2 disulfide bridges follow: Cys-191/Cys-242 and Cys-344/Cys-354. Residue Asn-384 is glycosylated (N-linked (GlcNAc...) asparagine; by host). The BetaCoV S1-CTD domain maps to Thr-386–Met-592. A disulfide bridge connects residues Cys-388 and Cys-412. The N-linked (GlcNAc...) asparagine; by host glycan is linked to Asn-415. Intrachain disulfides connect Cys-430-Cys-483 and Cys-442-Cys-590. N-linked (GlcNAc...) asparagine; by host glycosylation is found at Asn-492, Asn-624, Asn-723, Asn-762, Asn-773, Asn-784, and Asn-869. Fusion peptide regions lie at residues Ser-887–Tyr-908 and Gln-906–Val-928. Cys-911 and Cys-924 form a disulfide bridge. The heptad repeat 1 stretch occupies residues Gln-993 to Phe-1043. A coiled-coil region spans residues Gln-1022–Ile-1066. N-linked (GlcNAc...) asparagine; by host glycans are attached at residues Asn-1144, Asn-1147, Asn-1174, Asn-1226, Asn-1242, Asn-1257, Asn-1278, and Asn-1289. Residues Gly-1247–Glu-1286 are heptad repeat 2. Residues Thr-1259–Leu-1287 adopt a coiled-coil conformation. A helical membrane pass occupies residues Trp-1298 to Leu-1318. Residues Leu-1319 to His-1352 are Cytoplasmic-facing. Residues His-1350–His-1352 carry the KxHxx motif.

This sequence belongs to the betacoronaviruses spike protein family. As to quaternary structure, homotrimer; each monomer consists of a S1 and a S2 subunit. The resulting peplomers protrude from the virus surface as spikes. In terms of processing, specific enzymatic cleavages in vivo yield mature proteins. The precursor is processed into S1 and S2 by host cell furin or another cellular protease to yield the mature S1 and S2 proteins. Additionally, a second cleavage leads to the release of a fusion peptide after viral attachment to host cell receptor. Post-translationally, the cytoplasmic Cys-rich domain is palmitoylated. Spike glycoprotein is digested within host endosomes.

It localises to the virion membrane. It is found in the host endoplasmic reticulum-Golgi intermediate compartment membrane. Its subcellular location is the host cell membrane. Functionally, attaches the virion to the cell membrane by interacting with host receptor, initiating the infection. In terms of biological role, mediates fusion of the virion and cellular membranes by acting as a class I viral fusion protein. Under the current model, the protein has at least three conformational states: pre-fusion native state, pre-hairpin intermediate state, and post-fusion hairpin state. During viral and target cell membrane fusion, the coiled coil regions (heptad repeats) assume a trimer-of-hairpins structure, positioning the fusion peptide in close proximity to the C-terminal region of the ectodomain. The formation of this structure appears to drive apposition and subsequent fusion of viral and target cell membranes. Acts as a viral fusion peptide which is unmasked following S2 cleavage occurring upon virus endocytosis. This chain is Spike glycoprotein, found in Bat coronavirus HKU4 (BtCoV).